Consider the following 444-residue polypeptide: Phosphoribosylamine--glycine ligase (444 aa).

The region spanning arginine 109 to glutamate 324 is the ATP-grasp domain. An ATP-binding site is contributed by methionine 140 to threonine 202. Mg(2+) is bound by residues glutamine 282, glutamate 294, and asparagine 296. 3 residues coordinate Mn(2+): glutamine 282, glutamate 294, and asparagine 296.

It belongs to the GARS family. It depends on Mg(2+) as a cofactor. Mn(2+) serves as cofactor.

It catalyses the reaction 5-phospho-beta-D-ribosylamine + glycine + ATP = N(1)-(5-phospho-beta-D-ribosyl)glycinamide + ADP + phosphate + H(+). It functions in the pathway purine metabolism; IMP biosynthesis via de novo pathway; N(1)-(5-phospho-D-ribosyl)glycinamide from 5-phospho-alpha-D-ribose 1-diphosphate: step 2/2. This is Phosphoribosylamine--glycine ligase from Methanococcus maripaludis (strain C5 / ATCC BAA-1333).